An 87-amino-acid chain; its full sequence is Small ribosomal subunit protein bS20 (87 aa).

The segment covering Met1 to Ala15 has biased composition (basic residues). A disordered region spans residues Met1–Thr27. Residues Lys16–Thr27 show a composition bias toward basic and acidic residues.

It belongs to the bacterial ribosomal protein bS20 family.

Its function is as follows. Binds directly to 16S ribosomal RNA. The chain is Small ribosomal subunit protein bS20 from Citrifermentans bemidjiense (strain ATCC BAA-1014 / DSM 16622 / JCM 12645 / Bem) (Geobacter bemidjiensis).